The chain runs to 862 residues: DNA mismatch repair protein MutS (862 aa).

618 to 625 lines the ATP pocket; the sequence is GPNMGGKS. Residues 799 to 824 are disordered; sequence QLESRDNQASPAVASAPQQQSLSLSP. Residues 806 to 824 show a composition bias toward low complexity; the sequence is QASPAVASAPQQQSLSLSP.

Belongs to the DNA mismatch repair MutS family.

Functionally, this protein is involved in the repair of mismatches in DNA. It is possible that it carries out the mismatch recognition step. This protein has a weak ATPase activity. The protein is DNA mismatch repair protein MutS of Shewanella denitrificans (strain OS217 / ATCC BAA-1090 / DSM 15013).